The sequence spans 1049 residues: Multidrug efflux pump subunit AcrB (1049 aa).

At 1–9 (MPNFFIDRP) the chain is on the cytoplasmic side. Residues 10–28 (IFAWVIAIIIMLAGGLAIL) traverse the membrane as a helical segment. Topologically, residues 29 to 336 (KLPVAQYPTI…YDTTPFVKIS (308 aa)) are periplasmic. A helical transmembrane segment spans residues 337 to 356 (IHEVVKTLVEAIILVFLVMY). The Cytoplasmic segment spans residues 357-365 (LFLQNFRAT). A helical membrane pass occupies residues 366–385 (LIPTIAVPVVLLGTFAVLAA). Residues 386–391 (FGFSIN) are Periplasmic-facing. The chain crosses the membrane as a helical span at residues 392-413 (TLTMFGMVLAIGLLVDDAIVVV). Residues 414–438 (ENVERVMAEEGLPPKEATRKSMGQI) are Cytoplasmic-facing. The helical transmembrane segment at 439–457 (QGALVGIAMVLSAVFVPMA) threads the bilayer. Over 458–465 (FFGGSTGA) the chain is Periplasmic. The chain crosses the membrane as a helical span at residues 466 to 490 (IYRQFSITIVSAMALSVLVALILTP). Topologically, residues 491–538 (ALCATMLKPIAKGDHGEGKKGFFGWFNRMFEKSTHHYTDSVGGILRST) are cytoplasmic. The helical transmembrane segment at 539–555 (GRYLVLYLIIVVGMAYL) threads the bilayer. The Periplasmic portion of the chain corresponds to 556–871 (FVRLPSSFLP…MSYQERLSGN (316 aa)). Residues 872–888 (QAPSLYAISLIVVFLCL) traverse the membrane as a helical segment. Residues 889–898 (AALYESWSIP) are Cytoplasmic-facing. Residues 899-918 (FSVMLVVPLGVIGALLAATF) traverse the membrane as a helical segment. The Periplasmic portion of the chain corresponds to 919–924 (RGLTND). The chain crosses the membrane as a helical span at residues 925–943 (VYFQVGLLTTIGLSAKNAI). The Cytoplasmic portion of the chain corresponds to 944 to 972 (LIVEFAKDLMDKEGKGLIEATLDAVRMRL). Residues 973-992 (RPILMTSLAFILGVMPLVIS) form a helical membrane-spanning segment. The Periplasmic portion of the chain corresponds to 993 to 998 (TGAGSG). The chain crosses the membrane as a helical span at residues 999-1018 (AQNAVGTGVMGGMVTATVLA). The Cytoplasmic segment spans residues 1019–1049 (IFFVPVFFVVVRRRFSRKNEDIEHSHTVDHH).

Belongs to the resistance-nodulation-cell division (RND) (TC 2.A.6) family. Homotrimer, with large domains that extend into the periplasm, interacts with AcrA and TolC. AcrA may be required to stably link this protein and TolC. Interacts with AcrZ. Part of the AcrA-AcrB-AcrZ-TolC efflux pump.

The protein localises to the cell inner membrane. In terms of biological role, acrA-AcrB-AcrZ-TolC is a drug efflux protein complex with broad substrate specificity that uses the proton motive force to export substrates. Its function is as follows. (Microbial infection) Involved in contact-dependent growth inhibition (CDI), acts downstream of BamA, the receptor for CDI. Its role in CDI is independent of the AcrA-AcrB-TolC efflux pump complex. This is Multidrug efflux pump subunit AcrB (acrB) from Escherichia coli (strain K12).